We begin with the raw amino-acid sequence, 302 residues long: NAD kinase 2 (302 aa).

The active-site Proton acceptor is the D78. NAD(+) contacts are provided by residues 78–79 (DG), 152–153 (NE), D182, 193–198 (TAYSLS), and A217.

It belongs to the NAD kinase family. The cofactor is a divalent metal cation.

It is found in the cytoplasm. It catalyses the reaction NAD(+) + ATP = ADP + NADP(+) + H(+). Involved in the regulation of the intracellular balance of NAD and NADP, and is a key enzyme in the biosynthesis of NADP. Catalyzes specifically the phosphorylation on 2'-hydroxyl of the adenosine moiety of NAD to yield NADP. The protein is NAD kinase 2 of Prochlorococcus marinus (strain SARG / CCMP1375 / SS120).